A 265-amino-acid chain; its full sequence is Hydroxyethylthiazole kinase (265 aa).

Met-50 contributes to the substrate binding site. Residues Arg-125 and Thr-171 each coordinate ATP. Gly-198 contributes to the substrate binding site.

This sequence belongs to the Thz kinase family. It depends on Mg(2+) as a cofactor.

The enzyme catalyses 5-(2-hydroxyethyl)-4-methylthiazole + ATP = 4-methyl-5-(2-phosphooxyethyl)-thiazole + ADP + H(+). Its pathway is cofactor biosynthesis; thiamine diphosphate biosynthesis; 4-methyl-5-(2-phosphoethyl)-thiazole from 5-(2-hydroxyethyl)-4-methylthiazole: step 1/1. In terms of biological role, catalyzes the phosphorylation of the hydroxyl group of 4-methyl-5-beta-hydroxyethylthiazole (THZ). The polypeptide is Hydroxyethylthiazole kinase (Salmonella choleraesuis (strain SC-B67)).